Consider the following 202-residue polypeptide: Adenosylcobalamin/alpha-ribazole phosphatase (202 aa).

His-8 serves as the catalytic Tele-phosphohistidine intermediate. Glu-81 functions as the Proton donor/acceptor in the catalytic mechanism.

This sequence belongs to the phosphoglycerate mutase family. Monomer.

It catalyses the reaction adenosylcob(III)alamin 5'-phosphate + H2O = adenosylcob(III)alamin + phosphate. The catalysed reaction is alpha-ribazole 5'-phosphate + H2O = alpha-ribazole + phosphate. The protein operates within nucleoside biosynthesis; alpha-ribazole biosynthesis; alpha-ribazole from 5,6-dimethylbenzimidazole: step 2/2. Functionally, catalyzes the conversion of adenosylcobalamin 5'-phosphate to adenosylcobalamin (vitamin B12); involved in the assembly of the nucleotide loop of cobalamin. Also catalyzes the hydrolysis of the phospho group from alpha-ribazole 5'-phosphate to form alpha-ribazole. This is Adenosylcobalamin/alpha-ribazole phosphatase (cobC) from Salmonella typhimurium (strain LT2 / SGSC1412 / ATCC 700720).